Here is a 108-residue protein sequence, read N- to C-terminus: uncharacterized protein (108 aa).

The interval 1-108 (MAKVTSEPQK…DKEQSETSVL (108 aa)) is disordered. Residues 26-56 (KGRKKGKTPRQRRSRSGVKGLKTTRKAKRPL) are compositionally biased toward basic residues. Residues 58 to 70 (GSSSQKAGETNTP) are compositionally biased toward polar residues. Basic residues predominate over residues 73–92 (KPKKARGPILRGRYHRLKEK). Residues 93 to 108 (MKKEEADKEQSETSVL) are compositionally biased toward basic and acidic residues.

This is an uncharacterized protein from Homo sapiens (Human).